Reading from the N-terminus, the 801-residue chain is MGKVSKSPGKGEKRIGKVGKKNGKSNAPTEGSNSGKASRFTMSERNLGLMQEIIRKDPESYKEEFLEQFNYFVQTMKLLHLQPEQSRQEMQSLVDSVLFLSGLAKHYPKESKQFSDSLFELLREQGAGLDPEVRMAFCKALVLLRNQDMIDPIILMETFFELVKVEDKVLRKFLLSSISAHLKRVYHKKKDVKMLGKIQNLCFSKMKDSRSIVARAAQLVCIDAFRRKFWRDARTANVIAQACFHKVAKIQVTSMKFFLGSENENGDAEDSDEMDSDAEDNTKTLKEVMTSFRNVKKTRKREKNVERAKKMISKKKKAKKEGRSKECNLMAIQSLYDPQEFVDRLFGAVEAKKMDNFEVRLFKIALCARIIGIHRLHTLSFYSYLHRFLQPKQRDVTKILLYAAQACHEMVPPDTVEQLIRVIANNFVTDRNSPEAMTVGINAIREILSNCPFAATEELLRDLSEYKTYKNKNVSMAARSLITLFRAVNPKLLARKDRGKPQEKDDEDEEYNGFARPKVHDFISGAEILDEDAADGEQGHLEEDGTDSELDVSDVDTDDVDTDDDADEPVAKKKRVEQKSVENDAESDADDEEIEDEEEMDDEEEEIEISDEEEEEIDDEAEEEAVVEEEASEAVEKDPKLKASKNSMDRIMTQEDFKNIKAYQLKKQLIGEKRLKKQMGKGRSQADERIVDEMAEKLELKRSSDGLARLSDIEHFYKKKRQSKEERMADVMAGRADEDYKFGRPKKNGAHVGRTNDQNSKKKVFAMVKNKIRGRNRQRSFRDQQKSLRHYLMRQSGRKPQ.

Disordered regions lie at residues 1–40 (MGKVSKSPGKGEKRIGKVGKKNGKSNAPTEGSNSGKASRF), 495–517 (RKDRGKPQEKDDEDEEYNGFARP), 536–647 (GEQG…SKNS), and 739–801 (DYKF…RKPQ). Residues 24–40 (KSNAPTEGSNSGKASRF) show a composition bias toward polar residues. Composition is skewed to acidic residues over residues 544-568 (DGTDSELDVSDVDTDDVDTDDDADE) and 583-633 (NDAE…EASE). Composition is skewed to basic residues over residues 770–779 (NKIRGRNRQR) and 787–801 (SLRHYLMRQSGRKPQ).

Belongs to the SDA1 family.

It localises to the nucleus. Its function is as follows. Required for 60S pre-ribosomal subunits export to the cytoplasm. Required for normal somatic gonad development and for regulation of germline development and proliferation. This is Protein SDA1 homolog (pro-3) from Caenorhabditis elegans.